The chain runs to 376 residues: Putative 12-oxophytodienoate reductase 13 (376 aa).

FMN is bound by residues 25 to 27, Ala-58, and Gln-99; that span reads PLT. 165–168 contacts substrate; the sequence is HGAH. Residues Arg-217, Gly-301, and 322 to 323 each bind FMN; that span reads GR.

This sequence belongs to the NADH:flavin oxidoreductase/NADH oxidase family. FMN serves as cofactor.

Functionally, putative oxophytodienoate reductase that may be involved in the biosynthesis or metabolism of oxylipin signaling molecules. The protein is Putative 12-oxophytodienoate reductase 13 (OPR13) of Oryza sativa subsp. japonica (Rice).